Consider the following 366-residue polypeptide: Inhibin alpha chain (366 aa).

The N-terminal stretch at 1-18 (MVLHLLLFLLLTPQGGHS) is a signal peptide. The propeptide occupies 19–61 (CQGLELARELVLAKVRALFLDALGPPAVTREGGDPGVRRLPRR). A propeptide spans 62–232 (HALGGFTHRG…PPSGGERARR (171 aa)) (inhibin alpha N-terminal region). 2 N-linked (GlcNAc...) asparagine glycosylation sites follow: N146 and N268. Intrachain disulfides connect C262–C328, C291–C363, and C295–C365. N-linked (GlcNAc...) asparagine; partial glycosylation is present at N302.

Belongs to the TGF-beta family. As to quaternary structure, dimeric, linked by one or more disulfide bonds. Activin B is a dimer of alpha and beta-B. Inhibin A is a dimer of alpha and beta-A. Inhibin B is a dimer of alpha and beta-B. Interacts with TGFBR3L; this interaction regulates female fertility. In terms of processing, proteolytic processing yields a number of bioactive forms. The 20/23 kDa forms consist solely of the mature alpha chain, the 26/29 kDa forms consist of the most N-terminal propeptide linked through a disulfide bond to the mature alpha chain, the 50/53 kDa forms encompass the entire proprotein. Each type can be furthermore either mono- or diglycosylated, causing the mass difference. In terms of tissue distribution, originally found in ovary (granulosa cells) and testis (Sertoli cells), but widely distributed in many tissues including brain and placenta. In adrenal cortex expression is limited to the zona reticularis and the innermost zona fasciculata in the normal gland, extending centripetally into the zona fasciculata in hyperplasia. Also found in adrenocortical tumors. Also expressed in prostate epithelium of benign prostatic hyperplasia, in regions of basal cell hyperplasia and in nonmalignant regions of high grade prostate cancer. Only circulating inhibin B is found in male, whereas circulating inhibins A and B are found in female.

The protein localises to the secreted. Inhibins and activins inhibit and activate, respectively, the secretion of follitropin by the pituitary gland. Inhibins/activins are involved in regulating a number of diverse functions such as hypothalamic and pituitary hormone secretion, gonadal hormone secretion, germ cell development and maturation, erythroid differentiation, insulin secretion, nerve cell survival, embryonic axial development or bone growth, depending on their subunit composition. Inhibins appear to oppose the functions of activins. Its function is as follows. Inhibin A is a dimer of alpha/INHA and beta-A/INHBA that functions as a feedback regulator in the hypothalamic-pituitary-gonadal (HPG) axis. Inhibits the secretion of FSH from the anterior pituitary gland by acting on pituitary gonadotrope cells. Antagonizes activin A by binding to the proteoglycan, betaglycan, and forming a stable complex with and, thereby, sequestering type II activin receptors while excluding type I receptor. In terms of biological role, inhibin B is a dimer of alpha and beta-B that plays a crucial role in the regulation of the reproductive system by inhibiting the secretion of follicle-stimulating hormone (FSH) from the anterior pituitary gland. Thereby, maintains reproductive homeostasis in both males and females. Acts as a more potent suppressor of FSH release than inhibin A. Functions as competitive receptor antagonist binding activin type II receptors with high affinity in the presence of the TGF-beta type III coreceptor/TGFBR3L. The polypeptide is Inhibin alpha chain (INHA) (Homo sapiens (Human)).